The sequence spans 262 residues: Integral membrane protein 2B (262 aa).

The Cytoplasmic segment spans residues 1–49 (MVKVSFNSALAHKEAANKEEENSQVLILPPDAKEPEDVVVPAGHKRAWC). A helical; Signal-anchor for type II membrane protein transmembrane segment spans residues 50 to 70 (WCMCFGLAFMLAGVILGGAYL). The Lumenal portion of the chain corresponds to 71–262 (YKYFAFQQGG…FAMETLICEQ (192 aa)). The BRICHOS domain maps to 132-226 (FADSDPADIV…LCRGKETYKL (95 aa)). Cystine bridges form between Cys159–Cys218 and Cys243–Cys260. An N-linked (GlcNAc...) asparagine glycan is attached at Asn165.

The protein belongs to the ITM2 family. As to quaternary structure, homodimer; disulfide-linked. In terms of tissue distribution, expressed in areas of chondro-osteogenic transition and widely in the nervous system.

The protein localises to the golgi apparatus membrane. Its subcellular location is the cell membrane. It localises to the endosome membrane. In terms of biological role, plays a role in the induction of neurite outgrowth. The polypeptide is Integral membrane protein 2B (ITM2B) (Gallus gallus (Chicken)).